Here is a 484-residue protein sequence, read N- to C-terminus: tRNA sulfurtransferase (484 aa).

Residues 63–167 (REMIERLCCT…DQRLFVVHRQ (105 aa)) enclose the THUMP domain. ATP-binding positions include 185-186 (LM), K267, G289, and Q298. The cysteines at positions 346 and 457 are disulfide-linked. Positions 405 to 483 (ALAGQIVLDI…GHANVRVYRP (79 aa)) constitute a Rhodanese domain. C457 serves as the catalytic Cysteine persulfide intermediate.

It belongs to the ThiI family.

The protein localises to the cytoplasm. The catalysed reaction is [ThiI sulfur-carrier protein]-S-sulfanyl-L-cysteine + a uridine in tRNA + 2 reduced [2Fe-2S]-[ferredoxin] + ATP + H(+) = [ThiI sulfur-carrier protein]-L-cysteine + a 4-thiouridine in tRNA + 2 oxidized [2Fe-2S]-[ferredoxin] + AMP + diphosphate. It carries out the reaction [ThiS sulfur-carrier protein]-C-terminal Gly-Gly-AMP + S-sulfanyl-L-cysteinyl-[cysteine desulfurase] + AH2 = [ThiS sulfur-carrier protein]-C-terminal-Gly-aminoethanethioate + L-cysteinyl-[cysteine desulfurase] + A + AMP + 2 H(+). Its pathway is cofactor biosynthesis; thiamine diphosphate biosynthesis. In terms of biological role, catalyzes the ATP-dependent transfer of a sulfur to tRNA to produce 4-thiouridine in position 8 of tRNAs, which functions as a near-UV photosensor. Also catalyzes the transfer of sulfur to the sulfur carrier protein ThiS, forming ThiS-thiocarboxylate. This is a step in the synthesis of thiazole, in the thiamine biosynthesis pathway. The sulfur is donated as persulfide by IscS. The sequence is that of tRNA sulfurtransferase from Azotobacter vinelandii (strain DJ / ATCC BAA-1303).